Reading from the N-terminus, the 497-residue chain is MEKKYILALDQGTTSSRAMIIDEEGEVIGVAQEEFDQIFPKPGWVEHNANEIWASILAVIAGVLLKTNISSKEIAGIGITNQRETTVIWDKESGNPIYNAIVWQSRQTEDICKQLRKDGYEDTIRSKTGLLIDPYFAGTKARWILDHVDGAQERAEKGELLFGTIDTWLVWKLTGGRAHITDYSNASRTLLYNIYDLEWDDELLKMLNIPKAMLPEVRPSSEVYADTVPYHFFGEEVPVAGIAGDQQAALFGQGCFEKGMAKNTYGTGCFLLMNTGEKAVRSENGLLTTLAWGIDGKVEYALEGSIFVAGSAIQWLRDGLRMVRQSSDSENYASRIESSDGVYVVPAFVGLGAPYWDSDVRGAVFGLTRGTEKEQFIRATLESLAYQTRDVLYAMEQDSGISLKTLRVDGGASANNFLMQFQSDILGVPVERPENKETTVLGAAFLAGLAVGVWKDKNEIKKHWKLDKRFEVEMKEEQREDLYEGWHKAVKAAQAFK.

Residue Thr-13 coordinates ADP. Positions 13, 14, and 15 each coordinate ATP. Position 13 (Thr-13) interacts with sn-glycerol 3-phosphate. Arg-17 contributes to the ADP binding site. Sn-glycerol 3-phosphate-binding residues include Arg-83, Glu-84, and Tyr-135. Glycerol contacts are provided by Arg-83, Glu-84, and Tyr-135. His-231 is modified (phosphohistidine; by HPr). Asp-245 is a sn-glycerol 3-phosphate binding site. Glycerol-binding residues include Asp-245 and Gln-246. Residues Thr-267 and Gly-310 each coordinate ADP. ATP-binding residues include Thr-267, Gly-310, Gln-314, and Gly-411. Residues Gly-411 and Asn-415 each coordinate ADP.

The protein belongs to the FGGY kinase family. Homotetramer and homodimer (in equilibrium). In terms of processing, the phosphoenolpyruvate-dependent sugar phosphotransferase system (PTS), including enzyme I, and histidine-containing protein (HPr) are required for the phosphorylation, which leads to the activation of the enzyme.

It catalyses the reaction glycerol + ATP = sn-glycerol 3-phosphate + ADP + H(+). Its pathway is polyol metabolism; glycerol degradation via glycerol kinase pathway; sn-glycerol 3-phosphate from glycerol: step 1/1. Activated by phosphorylation and inhibited by fructose 1,6-bisphosphate (FBP). Functionally, key enzyme in the regulation of glycerol uptake and metabolism. Catalyzes the phosphorylation of glycerol to yield sn-glycerol 3-phosphate. The protein is Glycerol kinase of Listeria monocytogenes serovar 1/2a (strain ATCC BAA-679 / EGD-e).